The following is a 295-amino-acid chain: Elongation factor Ts (295 aa).

The segment at 79-82 is involved in Mg(2+) ion dislocation from EF-Tu; that stretch reads TDFV.

Belongs to the EF-Ts family.

The protein localises to the cytoplasm. Functionally, associates with the EF-Tu.GDP complex and induces the exchange of GDP to GTP. It remains bound to the aminoacyl-tRNA.EF-Tu.GTP complex up to the GTP hydrolysis stage on the ribosome. The sequence is that of Elongation factor Ts from Bacillus anthracis (strain A0248).